The following is a 316-amino-acid chain: Putative mannose-6-phosphate isomerase YvyI (316 aa).

H98, E116, and H173 together coordinate Zn(2+). Residue R193 is part of the active site.

Belongs to the mannose-6-phosphate isomerase type 1 family. Zn(2+) is required as a cofactor.

It carries out the reaction D-mannose 6-phosphate = D-fructose 6-phosphate. This chain is Putative mannose-6-phosphate isomerase YvyI (yvyI), found in Bacillus subtilis (strain 168).